A 922-amino-acid chain; its full sequence is Translation initiation factor IF-2 (922 aa).

The segment at 243–329 (AAREAAKLAE…GKSKSGQEET (87 aa)) is disordered. Residues 250–264 (LAEAQKAAAPAPAAP) are compositionally biased toward low complexity. The segment covering 267-298 (KTLHKPDKPAAAKGAKGPDKKPAGAWKDDAAR) has biased composition (basic and acidic residues). Positions 422–589 (ARPPVVTVMG…AILLQAEVLE (168 aa)) constitute a tr-type G domain. The tract at residues 431-438 (GHVDHGKT) is G1. A GTP-binding site is contributed by 431–438 (GHVDHGKT). Residues 456–460 (GITQH) are G2. The interval 477–480 (DTPG) is G3. GTP-binding positions include 477-481 (DTPGH) and 531-534 (NKID). Residues 531 to 534 (NKID) form a G4 region. Residues 567-569 (SAK) are G5.

This sequence belongs to the TRAFAC class translation factor GTPase superfamily. Classic translation factor GTPase family. IF-2 subfamily.

Its subcellular location is the cytoplasm. Functionally, one of the essential components for the initiation of protein synthesis. Protects formylmethionyl-tRNA from spontaneous hydrolysis and promotes its binding to the 30S ribosomal subunits. Also involved in the hydrolysis of GTP during the formation of the 70S ribosomal complex. This chain is Translation initiation factor IF-2, found in Thiobacillus denitrificans (strain ATCC 25259 / T1).